Reading from the N-terminus, the 72-residue chain is Defensin-like protein 230 (72 aa).

Residues 1 to 27 (MEKKSLACLSFLLLVLFVAQEIVVSEA) form the signal peptide. 4 cysteine pairs are disulfide-bonded: cysteine 30–cysteine 72, cysteine 41–cysteine 60, cysteine 45–cysteine 66, and cysteine 49–cysteine 68.

It belongs to the DEFL family.

Its subcellular location is the secreted. The chain is Defensin-like protein 230 (PI230) from Pisum sativum (Garden pea).